Here is a 764-residue protein sequence, read N- to C-terminus: Complement factor B (764 aa).

Residues 1–25 form the signal peptide; the sequence is MGSNLSPQLCLMPFILGLLSGGVTT. 3 Sushi domains span residues 35-100, 101-160, and 163-220; these read GSCS…ECRA, IHCP…ICDN, and GYCS…SCQD. Disulfide bonds link Cys-37-Cys-76, Cys-62-Cys-98, Cys-103-Cys-145, Cys-131-Cys-158, Cys-165-Cys-205, and Cys-191-Cys-218. Residues Asn-122 and Asn-142 are each glycosylated (N-linked (GlcNAc...) asparagine). A VWFA domain is found at 270-469; the sequence is NIYLVLDGSD…NLEDVFYQMI (200 aa). 2 residues coordinate Mg(2+): Ser-278 and Ser-280. An N-linked (GlcNAc...) asparagine glycan is attached at Asn-285. Thr-353 contacts Mg(2+). A glycan (N-linked (GlcNAc...) asparagine) is linked at Asn-378. In terms of domain architecture, Peptidase S1 spans 477 to 757; the sequence is LCGMVWEHRK…VLPWLKEKLQ (281 aa). Intrachain disulfides connect Cys-478–Cys-596, Cys-511–Cys-527, Cys-599–Cys-615, Cys-656–Cys-682, and Cys-695–Cys-725. Catalysis depends on charge relay system residues His-526 and Asp-576. Ser-699 acts as the Charge relay system in catalysis.

This sequence belongs to the peptidase S1 family. In terms of assembly, monomer. Interacts with complement C3b; this interaction is dependent on the presence of Mg(2+). As to quaternary structure, catalytic component of the C3 convertase of the alternative complement pathway, also named C3bBb, composed of complement factor B Bb and complement C3b. Catalytic component of the C5 convertase of the alternative complement pathway, also named C3bBb3b, composed of complement factor B Bb and additional molecules of complement C3b. Interacts to CFP; this interaction contributes to the stabilization of the active C3-convertase enzyme complex. It depends on Mg(2+) as a cofactor. The cofactor is Mn(2+). In terms of processing, cleaved by CFD following activation of the alternative complement system, generating Ba and Bb chains. Cleavage and activation takes place when CFB is already associated with complement C3b.

The protein resides in the secreted. Its subcellular location is the cell surface. The enzyme catalyses Cleavage of Arg-|-Ser bond in complement component C3 alpha-chain to yield C3a and C3b, and Arg-|-Xaa bond in complement component C5 alpha-chain to yield C5a and C5b.. In terms of biological role, precursor of the catalytic component of the C3 and C5 convertase complexes of the alternative pathway of the complement system, a cascade of proteins that leads to phagocytosis and breakdown of pathogens and signaling that strengthens the adaptive immune system. The alternative complement pathway acts as an amplification loop that enhances other complement pathways (classical, lectin and GZMK) by promoting formation of additional C3 and C5 convertases. CFB is cleaved and activated by CFD to generate Ba and Bb chains; Bb chain constituting the catalytic component of the C3 and C5 convertases. Serine protease component of the complement C3 and C5 convertase complexes of the alternative complement pathway. Following cleavage and activation by factor D (CFD), forms the C3 convertase together with complement C3b. As part of the C3 convertase, cleaves and activates C3 into C3a anaphylatoxin and C3b opsonin, the next components of the complement pathways. When an additional complement C3b molecule binds to the C3 convertase, forms the C5 convertase, which cleaves and activates C5 into C5a anaphylatoxin and C5b component of the membrane attack complex. Functionally, involved in proliferation and differentiation of preactivated B-lymphocytes, rapid spreading of peripheral blood monocytes, stimulation of lymphocyte blastogenesis and lysis of erythrocytes. This chain is Complement factor B (CFB), found in Gorilla gorilla gorilla (Western lowland gorilla).